The following is a 67-amino-acid chain: Protein C' (67 aa).

This sequence belongs to the rhabdoviruses C protein family.

Seems to stimulates transcription by the viral polymerase. May play a role in viral pathogenesis or transmission by insects vectors. The polypeptide is Protein C' (P) (Vesicular stomatitis Indiana virus (strain 98COE North America) (VSIV)).